The following is a 142-amino-acid chain: Phosphoribosyl-AMP cyclohydrolase (142 aa).

Residue Asp-85 participates in Mg(2+) binding. Cys-86 contributes to the Zn(2+) binding site. Mg(2+) contacts are provided by Asp-87 and Asp-89. 2 residues coordinate Zn(2+): Cys-102 and Cys-109. Residues 120–142 form a disordered region; the sequence is GEPPTPVGAGERQPASGTADAAP.

This sequence belongs to the PRA-CH family. In terms of assembly, homodimer. Requires Mg(2+) as cofactor. It depends on Zn(2+) as a cofactor.

It localises to the cytoplasm. It catalyses the reaction 1-(5-phospho-beta-D-ribosyl)-5'-AMP + H2O = 1-(5-phospho-beta-D-ribosyl)-5-[(5-phospho-beta-D-ribosylamino)methylideneamino]imidazole-4-carboxamide. It functions in the pathway amino-acid biosynthesis; L-histidine biosynthesis; L-histidine from 5-phospho-alpha-D-ribose 1-diphosphate: step 3/9. Functionally, catalyzes the hydrolysis of the adenine ring of phosphoribosyl-AMP. This Acidothermus cellulolyticus (strain ATCC 43068 / DSM 8971 / 11B) protein is Phosphoribosyl-AMP cyclohydrolase.